Reading from the N-terminus, the 166-residue chain is Endoribonuclease YbeY (166 aa).

Zn(2+) is bound by residues histidine 111, histidine 115, and histidine 121. The interval 140 to 166 is disordered; sequence ELGYPDPYADDESADPPHSDTPSKDHE. The span at 154 to 166 shows a compositional bias: basic and acidic residues; that stretch reads DPPHSDTPSKDHE.

Belongs to the endoribonuclease YbeY family. Zn(2+) serves as cofactor.

It is found in the cytoplasm. In terms of biological role, single strand-specific metallo-endoribonuclease involved in late-stage 70S ribosome quality control and in maturation of the 3' terminus of the 16S rRNA. This Pseudomonas syringae pv. syringae (strain B728a) protein is Endoribonuclease YbeY.